The primary structure comprises 183 residues: MSVRKRIGVYPGTFDPITNGHFDIIQRATLVVDHLIVGVARNAGKGPLFSTDERVEMVRDELPHISTHGATVEVRAFDSLLMHFAVEMGAQVIIRGLRAVSDFEYEFQMAGMNHRLNPQVETLFLMASDRHQFISSRFVKEIGRLGGDIRPFVSPRVAKRLLSRFAQEMPLPADTTLPLQAAP.

Thr13 is a binding site for substrate. ATP contacts are provided by residues 13-14 (TF) and His21. 3 residues coordinate substrate: Lys45, Leu81, and Arg95. Residues 96–98 (GLR), Glu106, and 131–137 (HQFISSR) contribute to the ATP site.

This sequence belongs to the bacterial CoaD family. As to quaternary structure, homohexamer. Mg(2+) is required as a cofactor.

The protein resides in the cytoplasm. The catalysed reaction is (R)-4'-phosphopantetheine + ATP + H(+) = 3'-dephospho-CoA + diphosphate. The protein operates within cofactor biosynthesis; coenzyme A biosynthesis; CoA from (R)-pantothenate: step 4/5. Its function is as follows. Reversibly transfers an adenylyl group from ATP to 4'-phosphopantetheine, yielding dephospho-CoA (dPCoA) and pyrophosphate. The sequence is that of Phosphopantetheine adenylyltransferase from Rhodospirillum centenum (strain ATCC 51521 / SW).